The primary structure comprises 376 residues: Guanine nucleotide-binding protein G(s) subunit alpha (376 aa).

Gly-2 carries N-palmitoyl glycine lipidation. Cys-3 carries the S-palmitoyl cysteine lipid modification. The G-alpha domain maps to 36 to 376 (GTHRLLLLGA…RMHLRQYELL (341 aa)). Residues 39 to 52 (RLLLLGAGESGKST) form a G1 motif region. Residues 44 to 51 (GAGESGKS), 180 to 186 (LRCRVLT), 205 to 209 (DVGGQ), 274 to 277 (NKQD), and Ala-348 each bind GTP. Mg(2+)-binding residues include Ser-51 and Thr-186. The tract at residues 178–186 (DILRCRVLT) is G2 motif. The segment at 201–210 (FHMFDVGGQR) is G3 motif. Positions 270–277 (ILFLNKQD) are G4 motif. Positions 346 to 351 (TCAVDT) are G5 motif.

The protein belongs to the G-alpha family. G(s) subfamily. G proteins are composed of 3 units; alpha, beta and gamma. The alpha chain contains the guanine nucleotide binding site.

In terms of biological role, guanine nucleotide-binding proteins (G proteins) are involved as modulators or transducers in various transmembrane signaling systems. The G(s) protein is involved in hormonal regulation of adenylate cyclase: it activates the cyclase in response to beta-adrenergic stimuli. The sequence is that of Guanine nucleotide-binding protein G(s) subunit alpha from Lymnaea stagnalis (Great pond snail).